Reading from the N-terminus, the 283-residue chain is Elongation factor Ts (283 aa).

The segment at 80-83 (TDFV) is involved in Mg(2+) ion dislocation from EF-Tu.

This sequence belongs to the EF-Ts family.

The protein localises to the cytoplasm. Its function is as follows. Associates with the EF-Tu.GDP complex and induces the exchange of GDP to GTP. It remains bound to the aminoacyl-tRNA.EF-Tu.GTP complex up to the GTP hydrolysis stage on the ribosome. The protein is Elongation factor Ts of Histophilus somni (strain 129Pt) (Haemophilus somnus).